The sequence spans 429 residues: Zygotic gap protein knirps (429 aa).

The segment at residues 2-78 (NQTCKVCGEP…VGMSKGGSRY (77 aa)) is a DNA-binding region (nuclear receptor). 2 NR C4-type zinc fingers span residues 5–25 (CKVC…CEGC) and 42–66 (CKNE…LRKC). Positions 112 to 126 (SVGGAPSASSPVGSP) are enriched in low complexity. Disordered regions lie at residues 112-148 (SVGG…QQQQ), 223-250 (QSVD…SSAR), 338-357 (TSRS…QEVE), and 375-397 (SSSS…AEVK). 2 stretches are compositionally biased toward polar residues: residues 225–237 (VDSV…FSPA) and 338–349 (TSRSSVHSFNDS). Residues 375–393 (SSSSSSHSAAHSPNTTTAH) are compositionally biased toward low complexity.

This sequence belongs to the nuclear hormone receptor family. NR0 subfamily.

Its subcellular location is the nucleus. Functionally, transcriptional repressor. Binds to multiple sites in the eve stripe 3 enhancer element. Plays an essential role in the segmentation process both by refining the expression patterns of gap genes and by establishing pair-rules stripes of gene expression. This chain is Zygotic gap protein knirps (kni), found in Drosophila melanogaster (Fruit fly).